A 49-amino-acid chain; its full sequence is Large ribosomal subunit protein bL33C (49 aa).

The protein belongs to the bacterial ribosomal protein bL33 family.

The polypeptide is Large ribosomal subunit protein bL33C (Lactococcus lactis subsp. cremoris (strain MG1363)).